Consider the following 587-residue polypeptide: Leucine-rich repeat-containing protein 63 (587 aa).

7 LRR repeats span residues 251-274, 344-367, 368-390, 392-413, 414-436, 437-459, and 487-510; these read QSVI…IPPR, AFQL…ILCL, KNLQ…IQQL, FLRI…LFSL, SYLE…IQKL, RSLE…ILKL, and LTQI…IPVE.

The protein is Leucine-rich repeat-containing protein 63 (LRRC63) of Homo sapiens (Human).